A 98-amino-acid chain; its full sequence is NADH-ubiquinone oxidoreductase chain 4L (98 aa).

3 consecutive transmembrane segments (helical) span residues 1–21 (MSMV…GLLM), 29–49 (SLLC…VAIL), and 61–81 (IILL…LVMV).

Belongs to the complex I subunit 4L family. In terms of assembly, core subunit of respiratory chain NADH dehydrogenase (Complex I) which is composed of 45 different subunits.

The protein resides in the mitochondrion inner membrane. It carries out the reaction a ubiquinone + NADH + 5 H(+)(in) = a ubiquinol + NAD(+) + 4 H(+)(out). Functionally, core subunit of the mitochondrial membrane respiratory chain NADH dehydrogenase (Complex I) which catalyzes electron transfer from NADH through the respiratory chain, using ubiquinone as an electron acceptor. Part of the enzyme membrane arm which is embedded in the lipid bilayer and involved in proton translocation. The polypeptide is NADH-ubiquinone oxidoreductase chain 4L (MT-ND4L) (Felis catus (Cat)).